The following is a 601-amino-acid chain: Glutamine--fructose-6-phosphate aminotransferase [isomerizing] (601 aa).

C2 serves as the catalytic Nucleophile; for GATase activity. The region spanning 2–214 (CGITGYIGTD…NGDIAHLTET (213 aa)) is the Glutamine amidotransferase type-2 domain. SIS domains follow at residues 281-420 (STET…ARNA) and 453-591 (IGRE…IDKP). The active-site For Fru-6P isomerization activity is K596.

In terms of assembly, homodimer.

Its subcellular location is the cytoplasm. It carries out the reaction D-fructose 6-phosphate + L-glutamine = D-glucosamine 6-phosphate + L-glutamate. Functionally, catalyzes the first step in hexosamine metabolism, converting fructose-6P into glucosamine-6P using glutamine as a nitrogen source. The chain is Glutamine--fructose-6-phosphate aminotransferase [isomerizing] from Halobacterium salinarum (strain ATCC 700922 / JCM 11081 / NRC-1) (Halobacterium halobium).